Reading from the N-terminus, the 164-residue chain is Small ribosomal subunit protein uS3m (164 aa).

The transit peptide at 1–23 (MLRSIQHVEALSSRQISTTSMLL) directs the protein to the mitochondrion.

This sequence belongs to the universal ribosomal protein uS3 family. Component of the mitochondrial ribosome small subunit (28S) which comprises a 12S rRNA and about 30 distinct proteins.

Its subcellular location is the mitochondrion. The polypeptide is Small ribosomal subunit protein uS3m (mrps-24) (Caenorhabditis elegans).